A 195-amino-acid polypeptide reads, in one-letter code: Recombination protein RecR (195 aa).

A C4-type zinc finger spans residues 53-68 (CSVCFNIDVKSPCSIC). Residues 76 to 171 (QLLCIVEELG…KITRLACGIP (96 aa)) form the Toprim domain.

This sequence belongs to the RecR family.

In terms of biological role, may play a role in DNA repair. It seems to be involved in an RecBC-independent recombinational process of DNA repair. It may act with RecF and RecO. The protein is Recombination protein RecR of Ehrlichia canis (strain Jake).